The chain runs to 684 residues: DNA-directed RNA polymerase subunit beta' (684 aa).

The Zn(2+) site is built by cysteine 69, cysteine 71, cysteine 87, and cysteine 90. 3 residues coordinate Mg(2+): aspartate 491, aspartate 493, and aspartate 495.

Belongs to the RNA polymerase beta' chain family. RpoC1 subfamily. As to quaternary structure, in plastids the minimal PEP RNA polymerase catalytic core is composed of four subunits: alpha, beta, beta', and beta''. When a (nuclear-encoded) sigma factor is associated with the core the holoenzyme is formed, which can initiate transcription. The cofactor is Mg(2+). Zn(2+) is required as a cofactor.

The protein localises to the plastid. It localises to the chloroplast. The catalysed reaction is RNA(n) + a ribonucleoside 5'-triphosphate = RNA(n+1) + diphosphate. DNA-dependent RNA polymerase catalyzes the transcription of DNA into RNA using the four ribonucleoside triphosphates as substrates. The sequence is that of DNA-directed RNA polymerase subunit beta' from Phaseolus vulgaris (Kidney bean).